A 239-amino-acid polypeptide reads, in one-letter code: U-scoloptoxin(11)-Sm3a (239 aa).

Positions 1–16 (MINFLLLVLILSVLES) are cleaved as a signal peptide.

This sequence belongs to the scoloptoxin-11 family. Contains 9 disulfide bonds. In terms of tissue distribution, expressed by the venom gland.

Its subcellular location is the secreted. This Scolopendra morsitans (Tanzanian blue ringleg centipede) protein is U-scoloptoxin(11)-Sm3a.